An 822-amino-acid polypeptide reads, in one-letter code: Serine/threonine-protein phosphatase 4 regulatory subunit 3 (822 aa).

Positions 1–100 constitute a WH1 domain; sequence MTDTRRRVKV…DEIWEKICQV (100 aa). Residues 744–822 form a disordered region; it reads TSQLSASGHP…PLTKKARLGS (79 aa). A compositionally biased stretch (low complexity) spans 761–774; it reads SPGSPESPGSVSKS. Over residues 793–808 the composition is skewed to acidic residues; it reads YPDDDEEDDDNDEEEK.

It belongs to the SMEK family. As to quaternary structure, serine/threonine-protein phosphatase 4 (PP4) occurs in different assemblies of the catalytic and one or more regulatory subunits.

In terms of biological role, regulatory subunit of serine/threonine-protein phosphatase 4. This is Serine/threonine-protein phosphatase 4 regulatory subunit 3 (smek1) from Xenopus laevis (African clawed frog).